The following is a 424-amino-acid chain: Putative glutamate--cysteine ligase 2-3 (424 aa).

Disordered stretches follow at residues Met-1 to Val-20 and Gly-405 to Pro-424.

Belongs to the glutamate--cysteine ligase type 2 family. YbdK subfamily.

It carries out the reaction L-cysteine + L-glutamate + ATP = gamma-L-glutamyl-L-cysteine + ADP + phosphate + H(+). In terms of biological role, ATP-dependent carboxylate-amine ligase which exhibits weak glutamate--cysteine ligase activity. In Paenarthrobacter aurescens (strain TC1), this protein is Putative glutamate--cysteine ligase 2-3.